Here is a 101-residue protein sequence, read N- to C-terminus: Urease subunit beta (101 aa).

This sequence belongs to the urease beta subunit family. Heterotrimer of UreA (gamma), UreB (beta) and UreC (alpha) subunits. Three heterotrimers associate to form the active enzyme.

Its subcellular location is the cytoplasm. It catalyses the reaction urea + 2 H2O + H(+) = hydrogencarbonate + 2 NH4(+). It functions in the pathway nitrogen metabolism; urea degradation; CO(2) and NH(3) from urea (urease route): step 1/1. In Allorhizobium ampelinum (strain ATCC BAA-846 / DSM 112012 / S4) (Agrobacterium vitis (strain S4)), this protein is Urease subunit beta.